Here is a 193-residue protein sequence, read N- to C-terminus: dCTP deaminase (193 aa).

DCTP is bound by residues 110-115 (RSSLAR), D128, 136-138 (VLE), Y171, K178, and Q182. E138 functions as the Proton donor/acceptor in the catalytic mechanism. Positions 170–181 (PYNRRQDAKYRD) are enriched in basic and acidic residues. Positions 170-193 (PYNRRQDAKYRDQQGAVASRIDKD) are disordered.

Belongs to the dCTP deaminase family. As to quaternary structure, homotrimer.

It catalyses the reaction dCTP + H2O + H(+) = dUTP + NH4(+). Its pathway is pyrimidine metabolism; dUMP biosynthesis; dUMP from dCTP (dUTP route): step 1/2. In terms of biological role, catalyzes the deamination of dCTP to dUTP. This chain is dCTP deaminase, found in Enterobacter sp. (strain 638).